Reading from the N-terminus, the 443-residue chain is ATP-dependent protease ATPase subunit HslU (443 aa).

ATP-binding positions include isoleucine 19 and 61 to 66 (GVGKTE). Residues 139 to 158 (PPRDIGFSQPEEKDSNTRQV) form a disordered region. Residues aspartate 256, glutamate 321, and arginine 393 each coordinate ATP.

This sequence belongs to the ClpX chaperone family. HslU subfamily. In terms of assembly, a double ring-shaped homohexamer of HslV is capped on each side by a ring-shaped HslU homohexamer. The assembly of the HslU/HslV complex is dependent on binding of ATP.

The protein resides in the cytoplasm. In terms of biological role, ATPase subunit of a proteasome-like degradation complex; this subunit has chaperone activity. The binding of ATP and its subsequent hydrolysis by HslU are essential for unfolding of protein substrates subsequently hydrolyzed by HslV. HslU recognizes the N-terminal part of its protein substrates and unfolds these before they are guided to HslV for hydrolysis. The sequence is that of ATP-dependent protease ATPase subunit HslU from Cupriavidus taiwanensis (strain DSM 17343 / BCRC 17206 / CCUG 44338 / CIP 107171 / LMG 19424 / R1) (Ralstonia taiwanensis (strain LMG 19424)).